Reading from the N-terminus, the 652-residue chain is Tetracycline resistance protein TetP (652 aa).

Positions 2 to 252 constitute a tr-type G domain; it reads KKIINIGIVA…CSYFPFASND (251 aa). Residues 11–18, 75–79, and 129–132 contribute to the GTP site; these read AHVDAGKT, DTPGH, and NKLD.

It belongs to the TRAFAC class translation factor GTPase superfamily. Classic translation factor GTPase family. TetM/TetO subfamily.

Its function is as follows. Abolishes the inhibitory effect of tetracyclin on protein synthesis by a non-covalent modification of the ribosomes. The polypeptide is Tetracycline resistance protein TetP (tetP) (Clostridium perfringens).